The chain runs to 325 residues: Beta-lactamase 1 (325 aa).

Residues 1–26 (MRIRPTRRLLLGAVAPLALVPLVACG) form the signal peptide. Residues 30-50 (GSESGQQPGLGGCGTSAHGSA) form a disordered region. S93 acts as the Acyl-ester intermediate in catalysis. 270-272 (KSG) contributes to the substrate binding site.

Belongs to the class-A beta-lactamase family.

The catalysed reaction is a beta-lactam + H2O = a substituted beta-amino acid. The protein is Beta-lactamase 1 (blaL) of Streptomyces cacaoi.